Here is a 659-residue protein sequence, read N- to C-terminus: A-type ATP synthase subunit I (659 aa).

Helical transmembrane passes span 376-396 (FFFGFMLTDFVYGLLLGIISA), 415-435 (IMLWSSVFTMTLGILFGSYCG), 460-480 (MIALAIGLAHLFTGYLLGFIV), 489-509 (GAIFEQLSWLLIIIGITLFAL), 518-538 (LIVKGIFGIGLILFMIGEVLA), 542-562 (MAVLLVISDFFGFVGNWLSYA), 568-588 (ALATSGIALVINILVEMIWGI), and 590-610 (IASVPLGALIGILVLIGGHIF).

It belongs to the V-ATPase 116 kDa subunit family. In terms of assembly, has multiple subunits with at least A(3), B(3), C, D, E, F, H, I and proteolipid K(x).

The protein localises to the cell membrane. In terms of biological role, component of the A-type ATP synthase that produces ATP from ADP in the presence of a proton gradient across the membrane. The protein is A-type ATP synthase subunit I of Pyrococcus horikoshii (strain ATCC 700860 / DSM 12428 / JCM 9974 / NBRC 100139 / OT-3).